The chain runs to 183 residues: Calcium-binding protein M (183 aa).

Glycine 2 is lipidated: N-myristoyl glycine. EF-hand domains follow at residues 25–60, 61–96, 97–132, and 142–177; these read EEVANIYGEFKKFDKDGNGSFDRKEFVLFFKSKLPN, YPEDNLNKLFDAFDSDKSNTIDFKELTVALSIIGKG, SAEDKLKVLFDIYDKDKSGILEKKEVDEMIALMKNV, and DIELFIVKLFEKIDKDKNNLISREEFLTEGARSPSL. The Ca(2+) site is built by aspartate 74, aspartate 76, serine 78, threonine 80, glutamate 85, aspartate 110, aspartate 112, serine 114, glutamate 121, aspartate 155, aspartate 157, asparagine 159, and glutamate 166.

Belongs to the recoverin family.

This chain is Calcium-binding protein M (cbpM), found in Dictyostelium discoideum (Social amoeba).